Reading from the N-terminus, the 269-residue chain is 5'-nucleotidase SurE (269 aa).

A divalent metal cation contacts are provided by Asp11, Asp12, Ser43, and Asn101.

Belongs to the SurE nucleotidase family. Requires a divalent metal cation as cofactor.

The protein localises to the cytoplasm. It carries out the reaction a ribonucleoside 5'-phosphate + H2O = a ribonucleoside + phosphate. Functionally, nucleotidase that shows phosphatase activity on nucleoside 5'-monophosphates. This Prochlorococcus marinus subsp. pastoris (strain CCMP1986 / NIES-2087 / MED4) protein is 5'-nucleotidase SurE.